Reading from the N-terminus, the 107-residue chain is Pyrimidine/purine nucleoside phosphorylase (107 aa).

The protein belongs to the nucleoside phosphorylase PpnP family.

It carries out the reaction a purine D-ribonucleoside + phosphate = a purine nucleobase + alpha-D-ribose 1-phosphate. The catalysed reaction is adenosine + phosphate = alpha-D-ribose 1-phosphate + adenine. It catalyses the reaction cytidine + phosphate = cytosine + alpha-D-ribose 1-phosphate. The enzyme catalyses guanosine + phosphate = alpha-D-ribose 1-phosphate + guanine. It carries out the reaction inosine + phosphate = alpha-D-ribose 1-phosphate + hypoxanthine. The catalysed reaction is thymidine + phosphate = 2-deoxy-alpha-D-ribose 1-phosphate + thymine. It catalyses the reaction uridine + phosphate = alpha-D-ribose 1-phosphate + uracil. The enzyme catalyses xanthosine + phosphate = alpha-D-ribose 1-phosphate + xanthine. Functionally, catalyzes the phosphorolysis of diverse nucleosides, yielding D-ribose 1-phosphate and the respective free bases. Can use uridine, adenosine, guanosine, cytidine, thymidine, inosine and xanthosine as substrates. Also catalyzes the reverse reactions. In Azoarcus sp. (strain BH72), this protein is Pyrimidine/purine nucleoside phosphorylase.